The primary structure comprises 927 residues: MKSNSKVNINNNGDNHNQTKNNGTNGFLPNSLKFISTCIRTASSGVRSASASVAASLSSDSHELKDQVLWSSFDRLHTSESSFKNVLLLGYTNGFQVLDIDDSNDVTEFVSRRDDPVTFLQMQPLPAKCDGVEGFRSSHPILLAVADEAKGSGPIVTSRDGSVRNGYEDPLALSPTVVRFYSLRSHNYVHVLRFRSTVYMVRCSPRIVAVGLGSQIYCFDALTLENKFSVLSYPVPQLGNQGISGVNVGYGPMAVGARWLAYASNSPLSSSIGRLSPQNVTPPGVSPSTSPNNGNLVARYAMESSKHLAAGLLNLGDKGYKTISKYCQDLKHDGPGPSLSSSPGRKVGRVGSHSAESDVVGTVIVKDFESRAIIAQFRAHTSPISALCFDPSGTLLVTASIHGNNINVFRIMPTPTKNGPGAQSYDWSSSHVPLYKLHRGMTSAVIQDICFSSYSQWIAIVSSKSTCHIYVLSPFGGENVLEIRNSQFDGPTLAPTLSLPWWSSPSFMTTHFSYPPPASVTLSVVSRIKCNNFFHAASSVVGKPTFPSGCLAAVFHQSVPQESQSSSPALDYLLVYTPSGHVVQYKLIPSLGGDQAESNTRNGATSGLTSEEELRVKVEPVQCWDVCRRADWPEREENICGLTYGGRKNAELTVDTSDSEDQTKPLEKHHVYLANAEVLINSGRKPIWQNSEISFYPMYPPDSDGKNLNSHQGGGETEIGKVSANEVDIRRKDLLPVYDNFHSVYTSMRNRGFSGERDSDSSSSSDPGQVKEMHPFNGMVYPEDEERRGSAHFALTPNQNPHTGIVTFKQPVVSISSAVKDTDYIDDDAHVLPKNASLPAETKIENSSGISGDSNVSSNRSDMSMNAADEGEGPIDGSPNFEQFFEEVVSNETVTETEHKDAPSDGKLDDDEDDDMLGGVFAFSEEG.

Disordered regions lie at residues 1–25 (MKSN…NGTN) and 333–353 (DGPG…VGSH). Residues 335 to 344 (PGPSLSSSPG) are compositionally biased toward low complexity. WD repeat units lie at residues 379–419 (AHTS…TKNG) and 441–482 (MTSA…NVLE). Disordered regions lie at residues 750 to 788 (NRGF…EERR) and 844 to 927 (IENS…SEEG). Residues 846 to 859 (NSSGISGDSNVSSN) are compositionally biased toward low complexity. The span at 896–907 (ETEHKDAPSDGK) shows a compositional bias: basic and acidic residues.

The protein belongs to the WD repeat PROPPIN family. As to quaternary structure, component of the PI(3,5)P2 regulatory complex at least composed of ATG18, SAC/FIG4, FAB1 and VAC14. As to expression, expressed in roots, flowers and leaves.

The protein localises to the preautophagosomal structure membrane. It is found in the vacuole membrane. Functionally, the PI(3,5)P2 regulatory complex regulates both the synthesis and turnover of phosphatidylinositol 3,5-bisphosphate (PtdIns(3,5)P2). Required for autophagy. The chain is Autophagy-related protein 18h (ATG18H) from Arabidopsis thaliana (Mouse-ear cress).